The sequence spans 1199 residues: Chromatin structure-remodeling complex subunit snf21 (1199 aa).

In terms of domain architecture, HSA spans 256–328 (QRSDRERRLK…AKQRLQALKE (73 aa)). The region spanning 429–594 (ISLYNNHLNG…WALLNFVLPR (166 aa)) is the Helicase ATP-binding domain. An ATP-binding site is contributed by 442–449 (DEMGLGKT). A DEGH box motif is present at residues 544–547 (DEGH). The Helicase C-terminal domain occupies 740-903 (LLDRILPKLF…STPEEREAFL (164 aa)). A disordered region spans residues 1017-1059 (MESEARPTRGRPKRNIASVDETPALTLNGKPKKKRGPAPDTLT). A Bromo domain is found at 1061–1171 (EHRSLLRRVC…TAMETKIEEL (111 aa)).

Belongs to the SNF2/RAD54 helicase family. In terms of assembly, component of the RSC complex composed of at least arp9, arp42, rsc1, rsc4, rsc7, rsc9, rsc58, sfh1, snf21, ssr1, ssr2, ssr3 and ssr4. The complex interacts with histone and histone variant components of centromeric chromatin.

The protein resides in the nucleus. Its function is as follows. Helicase. Component of the chromatin structure remodeling complex (RSC), which is involved in transcription regulation and nucleosome positioning. Controls particularly membrane and organelle development genes. In Schizosaccharomyces pombe (strain 972 / ATCC 24843) (Fission yeast), this protein is Chromatin structure-remodeling complex subunit snf21 (snf21).